The following is a 99-amino-acid chain: uncharacterized protein (99 aa).

Residues 6-26 form a helical membrane-spanning segment; that stretch reads LVCSIVFILFILFYDLKIGTI. Residues 48 to 95 form the LysM domain; it reads KTVKVKPGDTVMSIVGSAGSPDDIVKDFEALNPNVKANAIQAGTAYKF.

It localises to the secreted. It is found in the cell wall. The protein localises to the membrane. This is an uncharacterized protein from Bacillus subtilis (strain 168).